A 116-amino-acid chain; its full sequence is MTHYCGINRMKEGTDFEKKHTPFIECKDRVKANDYFEVKISTGIPHPMEDNHFIHWIELYMGDLYLARVDFTQFMKPEVKLMVKAPSKEHEKFILRALMRCNLHGVWEYEKEILLE.

Residues His-20, His-46, His-52, Cys-101, and His-104 each coordinate Fe cation.

It belongs to the desulfoferrodoxin family. Fe cation is required as a cofactor.

It catalyses the reaction reduced [rubredoxin] + superoxide + 2 H(+) = oxidized [rubredoxin] + H2O2. In terms of biological role, uses electrons from reduced NADP, by way of rubredoxin and an oxidoreductase, to catalyze the reduction of superoxide to hydrogen peroxide. In Methanocaldococcus jannaschii (strain ATCC 43067 / DSM 2661 / JAL-1 / JCM 10045 / NBRC 100440) (Methanococcus jannaschii), this protein is Putative superoxide reductase.